The chain runs to 237 residues: Sugar fermentation stimulation protein homolog (237 aa).

Belongs to the SfsA family.

In Pseudomonas putida (strain ATCC 700007 / DSM 6899 / JCM 31910 / BCRC 17059 / LMG 24140 / F1), this protein is Sugar fermentation stimulation protein homolog.